The chain runs to 354 residues: Peptide-N(4)-(N-acetyl-beta-D-glucosaminyl)asparagine amidase F (354 aa).

The first 40 residues, 1 to 40, serve as a signal peptide directing secretion; it reads MRKLLIFSISAYLMAGIVSCKGVDSATPVTEDRLALNAVN. A disulfide bond links Cys-91 and Cys-96. Residues Asp-100, Glu-158, and Glu-246 contribute to the active site. 2 disulfide bridges follow: Cys-244–Cys-248 and Cys-271–Cys-292.

As to quaternary structure, monomer.

The enzyme catalyses Hydrolysis of an N(4)-(acetyl-beta-D-glucosaminyl)asparagine residue in which the glucosamine residue may be further glycosylated, to yield a (substituted) N-acetyl-beta-D-glucosaminylamine and a peptide containing an aspartate residue.. In terms of biological role, cleaves an entire glycan from a glycoprotein. Requires that the glycosylated asparagine moiety (reaction 1) be substituted on its amino (R1) and carboxyl (R2) terminus with a polypeptide chain. The sequence is that of Peptide-N(4)-(N-acetyl-beta-D-glucosaminyl)asparagine amidase F (ngl) from Elizabethkingia miricola (Chryseobacterium miricola).